A 165-amino-acid polypeptide reads, in one-letter code: Transcriptional repressor NrdR (165 aa).

A zinc finger spans residues 3–34; sequence CPFCRNPDSRVVDSRMADDGSAIRRRRQCPEC. In terms of domain architecture, ATP-cone spans 46–136; it reads LTVIKRSGVG…VYQAFESLED (91 aa).

It belongs to the NrdR family. The cofactor is Zn(2+).

In terms of biological role, negatively regulates transcription of bacterial ribonucleotide reductase nrd genes and operons by binding to NrdR-boxes. This Arthrobacter sp. (strain FB24) protein is Transcriptional repressor NrdR.